The following is a 187-amino-acid chain: Large ribosomal subunit protein uL5 (187 aa).

Belongs to the universal ribosomal protein uL5 family. As to quaternary structure, part of the 50S ribosomal subunit; part of the 5S rRNA/L5/L18/L25 subcomplex. Contacts the 5S rRNA and the P site tRNA. Forms a bridge to the 30S subunit in the 70S ribosome.

Functionally, this is one of the proteins that bind and probably mediate the attachment of the 5S RNA into the large ribosomal subunit, where it forms part of the central protuberance. In the 70S ribosome it contacts protein S13 of the 30S subunit (bridge B1b), connecting the 2 subunits; this bridge is implicated in subunit movement. Contacts the P site tRNA; the 5S rRNA and some of its associated proteins might help stabilize positioning of ribosome-bound tRNAs. This chain is Large ribosomal subunit protein uL5, found in Mycobacterium bovis (strain ATCC BAA-935 / AF2122/97).